Reading from the N-terminus, the 591-residue chain is V-type ATP synthase alpha chain (591 aa).

Gly-233 to Thr-240 is an ATP binding site.

It belongs to the ATPase alpha/beta chains family.

The enzyme catalyses ATP + H2O + 4 H(+)(in) = ADP + phosphate + 5 H(+)(out). In terms of biological role, produces ATP from ADP in the presence of a proton gradient across the membrane. The V-type alpha chain is a catalytic subunit. This chain is V-type ATP synthase alpha chain, found in Streptococcus pyogenes serotype M5 (strain Manfredo).